Consider the following 222-residue polypeptide: GTP cyclohydrolase 1 (222 aa).

Positions 111, 114, and 182 each coordinate Zn(2+).

It belongs to the GTP cyclohydrolase I family. As to quaternary structure, toroid-shaped homodecamer, composed of two pentamers of five dimers.

The catalysed reaction is GTP + H2O = 7,8-dihydroneopterin 3'-triphosphate + formate + H(+). Its pathway is cofactor biosynthesis; 7,8-dihydroneopterin triphosphate biosynthesis; 7,8-dihydroneopterin triphosphate from GTP: step 1/1. This is GTP cyclohydrolase 1 from Salmonella choleraesuis (strain SC-B67).